The chain runs to 254 residues: Leucyl/phenylalanyl-tRNA--protein transferase (254 aa).

It belongs to the L/F-transferase family.

The protein localises to the cytoplasm. The enzyme catalyses N-terminal L-lysyl-[protein] + L-leucyl-tRNA(Leu) = N-terminal L-leucyl-L-lysyl-[protein] + tRNA(Leu) + H(+). It catalyses the reaction N-terminal L-arginyl-[protein] + L-leucyl-tRNA(Leu) = N-terminal L-leucyl-L-arginyl-[protein] + tRNA(Leu) + H(+). The catalysed reaction is L-phenylalanyl-tRNA(Phe) + an N-terminal L-alpha-aminoacyl-[protein] = an N-terminal L-phenylalanyl-L-alpha-aminoacyl-[protein] + tRNA(Phe). Its function is as follows. Functions in the N-end rule pathway of protein degradation where it conjugates Leu, Phe and, less efficiently, Met from aminoacyl-tRNAs to the N-termini of proteins containing an N-terminal arginine or lysine. This chain is Leucyl/phenylalanyl-tRNA--protein transferase, found in Burkholderia lata (strain ATCC 17760 / DSM 23089 / LMG 22485 / NCIMB 9086 / R18194 / 383).